Here is a 338-residue protein sequence, read N- to C-terminus: Beta-ketoacyl-[acyl-carrier-protein] synthase III (338 aa).

Active-site residues include Cys119 and His261. The ACP-binding stretch occupies residues 262–266 (QANQR). Residue Asn291 is part of the active site.

This sequence belongs to the thiolase-like superfamily. FabH family. Homodimer.

It localises to the cytoplasm. It catalyses the reaction malonyl-[ACP] + acetyl-CoA + H(+) = 3-oxobutanoyl-[ACP] + CO2 + CoA. The protein operates within lipid metabolism; fatty acid biosynthesis. Its function is as follows. Catalyzes the condensation reaction of fatty acid synthesis by the addition to an acyl acceptor of two carbons from malonyl-ACP. Catalyzes the first condensation reaction which initiates fatty acid synthesis and may therefore play a role in governing the total rate of fatty acid production. Possesses both acetoacetyl-ACP synthase and acetyl transacylase activities. Its substrate specificity determines the biosynthesis of branched-chain and/or straight-chain of fatty acids. The chain is Beta-ketoacyl-[acyl-carrier-protein] synthase III from Prochlorococcus marinus (strain NATL2A).